Consider the following 365-residue polypeptide: Spermine synthase (365 aa).

An N-acetylalanine modification is found at alanine 2. Serine 57 is subject to Phosphoserine. A PABS domain is found at 121-361; it reads RYWPTADGRL…ELWVFYTVWK (241 aa). S-adenosyl 3-(methylsulfanyl)propylamine is bound at residue glutamine 147. Spermidine contacts are provided by tyrosine 176 and aspartate 200. S-adenosyl 3-(methylsulfanyl)propylamine contacts are provided by residues glutamate 219 and 254–255; that span reads DC. The Proton acceptor role is filled by aspartate 275. The spermidine site is built by tyrosine 350 and glutamate 352.

Belongs to the spermidine/spermine synthase family. Homodimer. Dimerization is mediated through the N-terminal domain and seems to be required for activity as deletion of the N-terminal domain causes complete loss of activity.

The enzyme catalyses S-adenosyl 3-(methylsulfanyl)propylamine + spermidine = spermine + S-methyl-5'-thioadenosine + H(+). Its pathway is amine and polyamine biosynthesis; spermine biosynthesis; spermine from spermidine: step 1/1. In terms of biological role, catalyzes the production of spermine from spermidine and decarboxylated S-adenosylmethionine (dcSAM). The chain is Spermine synthase (SMS) from Bos taurus (Bovine).